The following is a 162-amino-acid chain: Transcription elongation factor GreA (162 aa).

Positions 45-74 (ENAEYEAAREKQAFIEGRIKELEDMTARAE) form a coiled coil.

It belongs to the GreA/GreB family.

In terms of biological role, necessary for efficient RNA polymerase transcription elongation past template-encoded arresting sites. The arresting sites in DNA have the property of trapping a certain fraction of elongating RNA polymerases that pass through, resulting in locked ternary complexes. Cleavage of the nascent transcript by cleavage factors such as GreA or GreB allows the resumption of elongation from the new 3'terminus. GreA releases sequences of 2 to 3 nucleotides. This Rickettsia typhi (strain ATCC VR-144 / Wilmington) protein is Transcription elongation factor GreA.